The following is a 183-amino-acid chain: Adenine phosphoribosyltransferase (183 aa).

Belongs to the purine/pyrimidine phosphoribosyltransferase family. As to quaternary structure, homodimer.

It is found in the cytoplasm. It catalyses the reaction AMP + diphosphate = 5-phospho-alpha-D-ribose 1-diphosphate + adenine. It functions in the pathway purine metabolism; AMP biosynthesis via salvage pathway; AMP from adenine: step 1/1. Its function is as follows. Catalyzes a salvage reaction resulting in the formation of AMP, that is energically less costly than de novo synthesis. The protein is Adenine phosphoribosyltransferase of Salmonella arizonae (strain ATCC BAA-731 / CDC346-86 / RSK2980).